A 323-amino-acid polypeptide reads, in one-letter code: MLCGRFAPTPSGALHLGNARTALLAWLHARRAGGRFILRIEDIDRARSRPHLAEQAIADLRWLGLDWDEGPDVGGPHGPYCQSEREELYRDALARLQAEGRLYPCYCSRAQLMAIASAPHGLTSEGPAYPGTCRRLTPEERRAREADGKTPSLRFALPDEEIAFTDLIAGPQRFPPGAGGDFVVLRADGVIGYQLAVVVDDALMGVTHVLRGGDLLDSTPRQILLYRALGRPVPAFGHLPLLLGPDGARLAKRHGAVTLAGIRAAGTSPETVVGHLAYLSGLVDQPEPVRPEELIPVFDLARIPREPVRIPAETIAALSGGTA.

L-glutamate-binding positions include arginine 5–threonine 9 and glutamate 41. Residues proline 8 to asparagine 18 carry the 'HIGH' region motif. 4 residues coordinate Zn(2+): cysteine 105, cysteine 107, tyrosine 129, and cysteine 133. Residues tyrosine 193 and arginine 211 each coordinate L-glutamate. The short motif at arginine 249–arginine 253 is the 'KMSKS' region element. Lysine 252 contacts ATP.

This sequence belongs to the class-I aminoacyl-tRNA synthetase family. GluQ subfamily. Zn(2+) is required as a cofactor.

Functionally, catalyzes the tRNA-independent activation of glutamate in presence of ATP and the subsequent transfer of glutamate onto a tRNA(Asp). Glutamate is transferred on the 2-amino-5-(4,5-dihydroxy-2-cyclopenten-1-yl) moiety of the queuosine in the wobble position of the QUC anticodon. This chain is Glutamyl-Q tRNA(Asp) synthetase, found in Symbiobacterium thermophilum (strain DSM 24528 / JCM 14929 / IAM 14863 / T).